The following is a 142-amino-acid chain: Transcription antitermination protein NusB (142 aa).

It belongs to the NusB family.

Involved in transcription antitermination. Required for transcription of ribosomal RNA (rRNA) genes. Binds specifically to the boxA antiterminator sequence of the ribosomal RNA (rrn) operons. The polypeptide is Transcription antitermination protein NusB (Levilactobacillus brevis (strain ATCC 367 / BCRC 12310 / CIP 105137 / JCM 1170 / LMG 11437 / NCIMB 947 / NCTC 947) (Lactobacillus brevis)).